The sequence spans 94 residues: DNA-directed RNA polymerase subunit omega (94 aa).

It belongs to the RNA polymerase subunit omega family. In terms of assembly, the RNAP catalytic core consists of 2 alpha, 1 beta, 1 beta' and 1 omega subunit. When a sigma factor is associated with the core the holoenzyme is formed, which can initiate transcription.

The enzyme catalyses RNA(n) + a ribonucleoside 5'-triphosphate = RNA(n+1) + diphosphate. Its function is as follows. Promotes RNA polymerase assembly. Latches the N- and C-terminal regions of the beta' subunit thereby facilitating its interaction with the beta and alpha subunits. This Bifidobacterium longum subsp. infantis (strain ATCC 15697 / DSM 20088 / JCM 1222 / NCTC 11817 / S12) protein is DNA-directed RNA polymerase subunit omega.